The chain runs to 277 residues: Ras suppressor protein 1 (277 aa).

Positions 1-24 are disordered; sequence MSKSLKKLVEESREKNQPEVDMSD. Serine 2 bears the N-acetylserine mark. Residues 7-24 are compositionally biased toward basic and acidic residues; it reads KLVEESREKNQPEVDMSD. 7 LRR repeats span residues 41-63, 64-85, 87-109, 110-133, 135-156, 158-179, and 181-202; these read HITQLVLSHNKLTMVPPNIAELK, NLEVLNFFNNQIEELPTQISSL, KLKHLNLGMNRLNTLPRGFGSLP, ALEVLDLTYNNLSENSLPGNFFYL, TLRALYLSDNDFEILPPDIGKL, KLQILSLRDNDLISLPKEIGEL, and QLKELHIQGNRLTVLPPELGNL. Positions 250–277 are disordered; the sequence is MQANPEPPKKNNDKSKKISRKPLAAKNR. The segment covering 256–265 has biased composition (basic and acidic residues); the sequence is PPKKNNDKSK.

Potentially plays a role in the Ras signal transduction pathway. Capable of suppressing v-Ras transformation in vitro. The sequence is that of Ras suppressor protein 1 (RSU1) from Homo sapiens (Human).